The chain runs to 143 residues: Large-conductance mechanosensitive channel (143 aa).

Helical transmembrane passes span 16–36 (VIDLAVGVVIGAAFGKIVTAL) and 84–104 (INTVVQFVIIAFAIFLVVKLI).

Belongs to the MscL family. As to quaternary structure, homopentamer.

It is found in the cell inner membrane. In terms of biological role, channel that opens in response to stretch forces in the membrane lipid bilayer. May participate in the regulation of osmotic pressure changes within the cell. The protein is Large-conductance mechanosensitive channel of Xanthomonas campestris pv. campestris (strain 8004).